Reading from the N-terminus, the 219-residue chain is GPI ethanolamine phosphate transferase, stabilizing subunit (219 aa).

Helical transmembrane passes span 11-31, 42-62, 86-106, 113-133, 155-175, and 189-209; these read YTHLLCIFSIILSVFIPSLFL, TWLCICSGFVTAVNLVLYLVV, YFLMSCFSFHVIFVLYGAPLI, FLFAVILSTFTTVPCLCLLGP, LQITTISSFVGAWLGALPIPL, and TLGATFGYVAGLVISPLWIYW.

It belongs to the PIGF family. Part of the ethanolamine phosphate transferase 3 complex composed by PIGO and PIGF. Part of the ethanolamine phosphate transferase 2 complex with PIGG. PIGF is required to stabilize PIGG and PIGO.

Its subcellular location is the endoplasmic reticulum membrane. It functions in the pathway glycolipid biosynthesis; glycosylphosphatidylinositol-anchor biosynthesis. In terms of biological role, stabilizing subunit of the ethanolamine phosphate transferase 3 and ethanolamine phosphate transferase 2 complexes that sequentially transfer an ethanolamine phosphate (EtNP) from a phosphatidylethanolamine (PE) to the 6-OH position of the third alpha-1,2-linked mannose and the second alpha-1,6-linked mannose of the alpha-D-Man-(1-&gt;2)-alpha-D-Man-(1-&gt;6)-2-PEtn-alpha-D-Man-(1-&gt;4)-alpha-D-GlcN-(1-&gt;6)-(1-radyl,2-acyl-sn-glycero-3-phospho)-2-acyl-inositol (also termed H6) intermediate to generate a 6-PEtn-alpha-D-Man-(1-&gt;2)-6-PEtn-alpha-D-Man-(1-&gt;6)-2-PEtn-alpha-D-Man-(1-&gt;4)-alpha-D-GlcN-(1-&gt;6)-(1-radyl,2-acyl-sn-glycero-3-phospho)-2-acyl-inositol (also termed H8). Participates in the tenth and eleventh steps of the glycosylphosphatidylinositol-anchor biosynthesis, in association with PIGO and PIGG, respectively. The chain is GPI ethanolamine phosphate transferase, stabilizing subunit from Homo sapiens (Human).